Consider the following 61-residue polypeptide: Large ribosomal subunit protein eL37 (61 aa).

Zn(2+)-binding residues include Cys19, Cys22, Cys34, and Cys37. Residues Cys19–Cys37 form a C4-type zinc finger.

Belongs to the eukaryotic ribosomal protein eL37 family. Zn(2+) serves as cofactor.

In terms of biological role, binds to the 23S rRNA. The polypeptide is Large ribosomal subunit protein eL37 (Saccharolobus islandicus (strain L.S.2.15 / Lassen #1) (Sulfolobus islandicus)).